We begin with the raw amino-acid sequence, 512 residues long: GMP synthase [glutamine-hydrolyzing] (512 aa).

The Glutamine amidotransferase type-1 domain occupies 9–198; sequence GVLVVDFGGQ…WLSLVGAPRT (190 aa). The active-site Nucleophile is the Cys-87. Catalysis depends on residues His-173 and Glu-175. The GMPS ATP-PPase domain occupies 199–387; sequence WRPGDMVSEL…LGVPRELIWK (189 aa). 226–232 serves as a coordination point for ATP; sequence SGGVDST.

It carries out the reaction XMP + L-glutamine + ATP + H2O = GMP + L-glutamate + AMP + diphosphate + 2 H(+). The protein operates within purine metabolism; GMP biosynthesis; GMP from XMP (L-Gln route): step 1/1. Its function is as follows. Catalyzes the synthesis of GMP from XMP. In Aeropyrum pernix (strain ATCC 700893 / DSM 11879 / JCM 9820 / NBRC 100138 / K1), this protein is GMP synthase [glutamine-hydrolyzing] (guaA).